Here is a 31-residue protein sequence, read N- to C-terminus: Potassium channel toxin alpha-KTx 5.1 (31 aa).

Disulfide bonds link cysteine 3–cysteine 21, cysteine 8–cysteine 26, and cysteine 12–cysteine 28. A [R/K]XCQ motif region spans residues 6 to 9; that stretch reads RMCQ. The residue at position 31 (histidine 31) is a Histidine amide.

It belongs to the short scorpion toxin superfamily. Potassium channel inhibitor family. Alpha-KTx 05 subfamily. Two disulfide bonds are the minimal requirement needed to produce a nativelike and bio-active conformation in this toxin. The third disulfide provides an additional contribution to structure stabilization and can modulate biological potency depending on its position and the structural regions involved in biological activity. As to expression, expressed by the venom gland.

Its subcellular location is the secreted. Blocker for the small conductance calcium-activated potassium channels. Shows the best affinity for KCa2.2/KCNN2 (Kd=0.2 nM), followed by KCa2.3/KCNN3 (Kd=1.1 nM) and KCa2.1/KCNN1 (Kd=325 nM). The polypeptide is Potassium channel toxin alpha-KTx 5.1 (Leiurus hebraeus (Hebrew deathstalker scorpion)).